Consider the following 393-residue polypeptide: Arginine biosynthesis bifunctional protein ArgJ 3 (393 aa).

Residues Thr-148, Lys-170, Thr-181, Glu-260, Asn-388, and Thr-393 each contribute to the substrate site. Thr-181 acts as the Nucleophile in catalysis.

The protein belongs to the ArgJ family. As to quaternary structure, heterotetramer of two alpha and two beta chains.

Its subcellular location is the cytoplasm. The catalysed reaction is N(2)-acetyl-L-ornithine + L-glutamate = N-acetyl-L-glutamate + L-ornithine. The enzyme catalyses L-glutamate + acetyl-CoA = N-acetyl-L-glutamate + CoA + H(+). Its pathway is amino-acid biosynthesis; L-arginine biosynthesis; L-ornithine and N-acetyl-L-glutamate from L-glutamate and N(2)-acetyl-L-ornithine (cyclic): step 1/1. It participates in amino-acid biosynthesis; L-arginine biosynthesis; N(2)-acetyl-L-ornithine from L-glutamate: step 1/4. Its function is as follows. Catalyzes two activities which are involved in the cyclic version of arginine biosynthesis: the synthesis of N-acetylglutamate from glutamate and acetyl-CoA as the acetyl donor, and of ornithine by transacetylation between N(2)-acetylornithine and glutamate. This Streptomyces clavuligerus protein is Arginine biosynthesis bifunctional protein ArgJ 3.